Here is a 268-residue protein sequence, read N- to C-terminus: Small ribosomal subunit protein eS1 (268 aa).

Positions 1–21 are disordered; the sequence is MAVGKNKGLSKGGKKGGKKKV.

It belongs to the eukaryotic ribosomal protein eS1 family. As to quaternary structure, component of the small ribosomal subunit. Mature ribosomes consist of a small (40S) and a large (60S) subunit. The 40S subunit contains about 33 different proteins and 1 molecule of RNA (18S). The 60S subunit contains about 49 different proteins and 3 molecules of RNA (28S, 5.8S and 5S).

The protein resides in the cytoplasm. Functionally, essential for oogenesis; required for late follicle cell development. The chain is Small ribosomal subunit protein eS1 from Drosophila erecta (Fruit fly).